A 232-amino-acid chain; its full sequence is MTKHGKRIRGILKSYDFSKSYSLQEAIDILKQCPPVRFDQTVDVSIKLGIDPKKSDQQIRGSVSLPHGTGKTLKILVFAAGEKAKEALDAGADFVGSDDLVEKIRGGWVDCDVAVATPDMMREVGKLGKVLGPRNLMPTPKAGTVTMDVTKTIAELRKGKIEFKADRAGVCNAGVGKLSFDGHLLKENIETLCSALIKAKPPAAKGQYLVSFTVSSTMGPGISVDTRELMAS.

It belongs to the universal ribosomal protein uL1 family. As to quaternary structure, part of the 50S ribosomal subunit.

In terms of biological role, binds directly to 23S rRNA. The L1 stalk is quite mobile in the ribosome, and is involved in E site tRNA release. Protein L1 is also a translational repressor protein, it controls the translation of the L11 operon by binding to its mRNA. The protein is Large ribosomal subunit protein uL1 of Chlamydia abortus (strain DSM 27085 / S26/3) (Chlamydophila abortus).